The primary structure comprises 499 residues: MVVEEQSLENGGSVHVVKGESNFRNVVCGPVRWLKMLSSELHWSFVFGVVSLYGINQGLGGSLGRVATEYYMKDVQKVQPSESQALTAITKIPWIIKPLWGILTDVLPIFGFHRRPYFILAGVLGVVSLLFISLHSNLHLYLALFWMTISSAAMAIADVTIDACTAYNSIKHPSLASDMQSLCSLSSSIGALLGFFMSGILVHLVGSKGVFGLLTFPFALVSVVGIVFSEPHVPGFSYKQVNQKFTDAGKAMWRTMKCSDVWRPSLYMYISLTLGLNIHEGLFYWFTDSKDGPLFAQETVGFILSIGSIGSILAATLYQLVLKDHPFRGLCLWTQLLFALSGMLDLILVFRLNLKFGLPDYLFIVVDEIVSQMIGRLKWMPLLVLTSKLCPHGIEGTFFALLMSIDNAGLMTSSWLGGIMLHVLKVTRTEFGNLWLAVLVRNVMRLLPLCFLFLVPKGDQNTFKLPDEIMGEDSDEEKDEKEGTRNLELASLVHSVDRR.

Helical transmembrane passes span 43–63 (WSFV…GGSL), 92–112 (IPWI…IFGF), 116–136 (PYFI…SLHS), 141–161 (YLAL…DVTI), 185–205 (LSSS…VHLV), 209–229 (GVFG…IVFS), 266–286 (LYMY…FYWF), 302–322 (FILS…QLVL), 330–350 (LCLW…ILVF), 354–374 (LKFG…SQMI), 399–419 (FALL…LGGI), and 435–455 (WLAV…LFLV).

It belongs to the major facilitator superfamily. Folate-biopterin transporter (TC 2.A.71) family.

Its subcellular location is the membrane. Functionally, could mediate folate transport. The chain is Probable folate-biopterin transporter 2 from Arabidopsis thaliana (Mouse-ear cress).